The following is an 82-amino-acid chain: uncharacterized protein (82 aa).

This is an uncharacterized protein from Anabaena cylindrica.